A 308-amino-acid polypeptide reads, in one-letter code: tRNA dimethylallyltransferase (308 aa).

Residue 14–21 coordinates ATP; it reads GPTASGKT. A substrate-binding site is contributed by 16–21; the sequence is TASGKT. 3 interaction with substrate tRNA regions span residues 39 to 42, 163 to 167, and 244 to 249; these read DSAL, QRLSR, and RCVGYR.

It belongs to the IPP transferase family. In terms of assembly, monomer. Mg(2+) serves as cofactor.

The catalysed reaction is adenosine(37) in tRNA + dimethylallyl diphosphate = N(6)-dimethylallyladenosine(37) in tRNA + diphosphate. Its function is as follows. Catalyzes the transfer of a dimethylallyl group onto the adenine at position 37 in tRNAs that read codons beginning with uridine, leading to the formation of N6-(dimethylallyl)adenosine (i(6)A). This is tRNA dimethylallyltransferase from Shewanella oneidensis (strain ATCC 700550 / JCM 31522 / CIP 106686 / LMG 19005 / NCIMB 14063 / MR-1).